The following is a 1217-amino-acid chain: MTIPEKPQGVIWTDAQWQSIYATGQDVLVAAAAGSGKTAVLVERIIQKILRDGIDVDRLLVVTFTNLSAREMKHRVDQRIQEASIADPANAHLKNQRIKIHQAQISTLHSFCLKLIQQHYDVLNIDPNFRTSSEAENILLLEQTIDEVIEQHYDILDPAFIELTEQLSSDRSDDQFRMIIKQLYFFSVANPNPTNWLDQLVTPYEEEAQQAQLIQLLTDLSKVFITAAYDALNKAYDLFSMMDSVDKHLAVIEDERRLMGRVLEGGFIDIPYLTGHEFGARLPNVTAKIKEANEMMVDALEDAKLQYKKYKSLIDKVKSDYFSREADDLKADMQQLAPRVKYLARIVKDVMSEFNRKKRSKNILDFSDYEHFALQILTNEDGSPSEIAESYRQHFQEILVDEYQDTNRVQEKILSCIKTGDEHNGNLFMVGDVKQSIYKFRQADPSLFIEKYQRFTIDGDGTGRRIDLSQNFRSRKEVLSTTNYIFKHMMDEQVGEVKYDEAAQLYYGAPYDESDHPVNLKVLVEADQEHSDLTGSEQEAHFIVEQVKDILEHQKVYDMKTGSYRSATYKDIVILERSFGQARNLQQAFKNEDIPFHVNSREGYFEQTEVRLVLSFLRAIDNPLQDIYLVGLMRSVIYQFKEDELAQIRILSPNDDYFYQSIVNYINDEAADAILVDKLKMFLSDIQSYQQYSKDHPVYQLIDKFYNDHYVIQYFSGLIGGRGRRANLYGLFNKAIEFENSSFRGLYQFIRFIDELIERGKDFGEENVVGPNDNVVRMMTIHSSKGLEFPFVIYSGLSKDFNKRDLKQPVILNQQFGLGMDYFDVDKEMAFPSLASVAYRAVAEKELVSEEIRLVYVALTRAKEQLYLIGRVKNDKSLLELEQLSISGEHIAVNERLTSPNPFHLIYSILSKHQSASIPDDLKFEKDIAQVEDSSRPNVNISIIYFEDVSTETILDNNEYRSVNQLETMQNGNEDVKAQIKHQLDYQYPYVNDTKKPSKQSVSELKRQYETEESGTSYERVRQYRIGFSTYERPKFLSEQGKRKANEIGTLMHTVMQHLPFKKERISEVELHQYIDGLIDKHIIEADAKKDIRMDEIMTFINSELYSIIAEAEQVYRELPFVVNQALVDQLPQGDEDVSIIQGMIDLIFVKDGVHYFVDYKTDAFNRRRGMTDEEIGTQLKNKYKIQMKYYQNTLQTILNKEVKGYLYFFKFGTLQL.

Residues 10 to 475 enclose the UvrD-like helicase ATP-binding domain; it reads VIWTDAQWQS…IDLSQNFRSR (466 aa). ATP is bound at residue 31 to 38; it reads AAAGSGKT. The UvrD-like helicase C-terminal domain occupies 476-786; sequence KEVLSTTNYI…RMMTIHSSKG (311 aa).

The protein belongs to the helicase family. AddA subfamily. As to quaternary structure, heterodimer of AddA and AddB/RexB. Mg(2+) is required as a cofactor.

It carries out the reaction Couples ATP hydrolysis with the unwinding of duplex DNA by translocating in the 3'-5' direction.. It catalyses the reaction ATP + H2O = ADP + phosphate + H(+). The heterodimer acts as both an ATP-dependent DNA helicase and an ATP-dependent, dual-direction single-stranded exonuclease. Recognizes the chi site generating a DNA molecule suitable for the initiation of homologous recombination. The AddA nuclease domain is required for chi fragment generation; this subunit has the helicase and 3' -&gt; 5' nuclease activities. This Staphylococcus aureus (strain MW2) protein is ATP-dependent helicase/nuclease subunit A.